The following is a 158-amino-acid chain: Putative ribonucleoside-diphosphate reductase small chain B (158 aa).

Belongs to the ribonucleoside diphosphate reductase small chain family.

In Arabidopsis thaliana (Mouse-ear cress), this protein is Putative ribonucleoside-diphosphate reductase small chain B (RNR2B).